We begin with the raw amino-acid sequence, 110 residues long: Late cornified envelope protein 2D (110 aa).

This sequence belongs to the LCE family. In terms of tissue distribution, skin-specific. Expression was readily detected in adult trunk skin, adult arm skin, fetal skin, penal skin, vulva, esophagus and tongue. Not expressed in the cervix, rectum, lung, colon, or placenta.

Its function is as follows. Precursors of the cornified envelope of the stratum corneum. In Homo sapiens (Human), this protein is Late cornified envelope protein 2D (LCE2D).